Here is a 91-residue protein sequence, read N- to C-terminus: Cell division topological specificity factor (91 aa).

It belongs to the MinE family.

Prevents the cell division inhibition by proteins MinC and MinD at internal division sites while permitting inhibition at polar sites. This ensures cell division at the proper site by restricting the formation of a division septum at the midpoint of the long axis of the cell. The sequence is that of Cell division topological specificity factor from Bradyrhizobium diazoefficiens (strain JCM 10833 / BCRC 13528 / IAM 13628 / NBRC 14792 / USDA 110).